The chain runs to 165 residues: Nucleotide-binding protein PMM0481 (165 aa).

Belongs to the YajQ family.

Functionally, nucleotide-binding protein. In Prochlorococcus marinus subsp. pastoris (strain CCMP1986 / NIES-2087 / MED4), this protein is Nucleotide-binding protein PMM0481.